Here is a 200-residue protein sequence, read N- to C-terminus: Probable molybdenum cofactor guanylyltransferase (200 aa).

GTP contacts are provided by residues 8 to 10 (LAG), lysine 20, aspartate 66, and aspartate 97. Position 97 (aspartate 97) interacts with Mg(2+).

This sequence belongs to the MobA family. The cofactor is Mg(2+).

The protein resides in the cytoplasm. It catalyses the reaction Mo-molybdopterin + GTP + H(+) = Mo-molybdopterin guanine dinucleotide + diphosphate. Transfers a GMP moiety from GTP to Mo-molybdopterin (Mo-MPT) cofactor (Moco or molybdenum cofactor) to form Mo-molybdopterin guanine dinucleotide (Mo-MGD) cofactor. The polypeptide is Probable molybdenum cofactor guanylyltransferase (Bacillus velezensis (strain DSM 23117 / BGSC 10A6 / LMG 26770 / FZB42) (Bacillus amyloliquefaciens subsp. plantarum)).